The following is a 180-amino-acid chain: Ribosome-recycling factor (180 aa).

It belongs to the RRF family.

It is found in the cytoplasm. Responsible for the release of ribosomes from messenger RNA at the termination of protein biosynthesis. May increase the efficiency of translation by recycling ribosomes from one round of translation to another. The chain is Ribosome-recycling factor from Chlamydia abortus (strain DSM 27085 / S26/3) (Chlamydophila abortus).